The primary structure comprises 327 residues: Biotin synthase (327 aa).

One can recognise a Radical SAM core domain in the interval 44 to 273 (FMGNKFDTCS…NAFLRFSGGR (230 aa)). Cys-62, Cys-66, and Cys-69 together coordinate [4Fe-4S] cluster. Residues Cys-138, Cys-198, and Arg-268 each contribute to the [2Fe-2S] cluster site.

This sequence belongs to the radical SAM superfamily. Biotin synthase family. Homodimer. [4Fe-4S] cluster serves as cofactor. It depends on [2Fe-2S] cluster as a cofactor.

It catalyses the reaction (4R,5S)-dethiobiotin + (sulfur carrier)-SH + 2 reduced [2Fe-2S]-[ferredoxin] + 2 S-adenosyl-L-methionine = (sulfur carrier)-H + biotin + 2 5'-deoxyadenosine + 2 L-methionine + 2 oxidized [2Fe-2S]-[ferredoxin]. It functions in the pathway cofactor biosynthesis; biotin biosynthesis; biotin from 7,8-diaminononanoate: step 2/2. Catalyzes the conversion of dethiobiotin (DTB) to biotin by the insertion of a sulfur atom into dethiobiotin via a radical-based mechanism. The sequence is that of Biotin synthase from Parabacteroides distasonis (strain ATCC 8503 / DSM 20701 / CIP 104284 / JCM 5825 / NCTC 11152).